A 250-amino-acid polypeptide reads, in one-letter code: Small ribosomal subunit protein uS3 (250 aa).

Positions 39 to 111 constitute a KH type-2 domain; sequence IRTLIKNHYP…KVQINIFEVK (73 aa).

It belongs to the universal ribosomal protein uS3 family. As to quaternary structure, part of the 30S ribosomal subunit. Forms a tight complex with proteins S10 and S14.

Binds the lower part of the 30S subunit head. Binds mRNA in the 70S ribosome, positioning it for translation. This is Small ribosomal subunit protein uS3 from Rubus stunt phytoplasma.